Here is a 62-residue protein sequence, read N- to C-terminus: 2-hydroxymuconate tautomerase (62 aa).

Pro-2 acts as the Proton acceptor; via imino nitrogen in catalysis. 9 to 12 (LEGR) serves as a coordination point for substrate.

This sequence belongs to the 4-oxalocrotonate tautomerase family. As to quaternary structure, homohexamer.

It carries out the reaction (2Z,4E)-2-hydroxyhexa-2,4-dienedioate = (3E)-2-oxohex-3-enedioate. Functionally, catalyzes both 1,3- and 1,5-keto-enol tautomerization of the diacid 2-hydroxymuconate (2-hydroxy-2,4-hexadienedioate) to produce 2-oxo-4-hexenedioate. This reaction is highly stereoselective and produces a mixture of stereoisomers, where the (3S)-isomer of 2-oxo-4-hexenedioate predominates. Also catalyzes the tautomerization of 2-hydroxymuconate to 2-oxo-3-hexenedioate, however this reaction is slower and occurs after the tautomerization of 2-hydroxymuconate to 2-oxo-4-hexenedioate. Using 2-hydroxy-2,4-pentadienoate, phenylenolpyruvate, (p-hydroxyphenyl)-enolpyruvate and 2-hydroxy-2,4-heptadiene-1,7-dioate, YwhB is a highly efficient 1,3-keto-enol tautomerase, but clearly not a 1,5-keto-enol tautomerase. Tautomerization of the two monoacids 2-hydroxy-2,4-pentadienoate and phenylenolpyruvate produces a mixture of stereoisomers, where the (3R)-isomers predominate. The polypeptide is 2-hydroxymuconate tautomerase (ywhB) (Bacillus subtilis (strain 168)).